Consider the following 300-residue polypeptide: Elongator complex protein 5 (300 aa).

S252 carries the post-translational modification Phosphoserine. Residues 264–300 (QQALLRPRPGQATSHIFYEPDAYDDLDQEDPDDDLDI) are disordered. Residues 284–300 (DAYDDLDQEDPDDDLDI) show a composition bias toward acidic residues.

It belongs to the ELP5 family. Component of the elongator complex which consists of ELP1, ELP2, ELP3, ELP4, ELP5 and ELP6; in the complex, is required for optimal binding of ELP3 to ELP4. Post-translationally, tyrosine-phosphorylated. Ubiquitously expressed with high levels in heart, brain, liver, skeletal muscle and testis.

Its subcellular location is the nucleus. The protein resides in the cytoplasm. The protein operates within tRNA modification; 5-methoxycarbonylmethyl-2-thiouridine-tRNA biosynthesis. In terms of biological role, component of the elongator complex which is required for multiple tRNA modifications, including mcm5U (5-methoxycarbonylmethyl uridine), mcm5s2U (5-methoxycarbonylmethyl-2-thiouridine), and ncm5U (5-carbamoylmethyl uridine). The elongator complex catalyzes formation of carboxymethyluridine in the wobble base at position 34 in tRNAs. Involved in cell migration. The chain is Elongator complex protein 5 from Homo sapiens (Human).